Consider the following 330-residue polypeptide: Aspartate--ammonia ligase (330 aa).

The protein belongs to the class-II aminoacyl-tRNA synthetase family. AsnA subfamily.

The protein localises to the cytoplasm. The enzyme catalyses L-aspartate + NH4(+) + ATP = L-asparagine + AMP + diphosphate + H(+). Its pathway is amino-acid biosynthesis; L-asparagine biosynthesis; L-asparagine from L-aspartate (ammonia route): step 1/1. The polypeptide is Aspartate--ammonia ligase (Streptococcus pyogenes serotype M1).